We begin with the raw amino-acid sequence, 245 residues long: tRNA pseudouridine synthase A (245 aa).

Asp52 (nucleophile) is an active-site residue. Position 111 (Tyr111) interacts with substrate.

Belongs to the tRNA pseudouridine synthase TruA family. Homodimer.

It catalyses the reaction uridine(38/39/40) in tRNA = pseudouridine(38/39/40) in tRNA. Its function is as follows. Formation of pseudouridine at positions 38, 39 and 40 in the anticodon stem and loop of transfer RNAs. The polypeptide is tRNA pseudouridine synthase A (Thermotoga neapolitana (strain ATCC 49049 / DSM 4359 / NBRC 107923 / NS-E)).